Reading from the N-terminus, the 800-residue chain is Endonuclease MutS2 (800 aa).

Position 336–343 (336–343 (GPNTGGKT)) interacts with ATP. In terms of domain architecture, Smr spans 725–800 (LDLRGVRYEA…GDGATIVELK (76 aa)).

It belongs to the DNA mismatch repair MutS family. MutS2 subfamily. In terms of assembly, homodimer. Binds to stalled ribosomes, contacting rRNA.

In terms of biological role, endonuclease that is involved in the suppression of homologous recombination and thus may have a key role in the control of bacterial genetic diversity. Its function is as follows. Acts as a ribosome collision sensor, splitting the ribosome into its 2 subunits. Detects stalled/collided 70S ribosomes which it binds and splits by an ATP-hydrolysis driven conformational change. Acts upstream of the ribosome quality control system (RQC), a ribosome-associated complex that mediates the extraction of incompletely synthesized nascent chains from stalled ribosomes and their subsequent degradation. Probably generates substrates for RQC. This chain is Endonuclease MutS2, found in Leuconostoc mesenteroides subsp. mesenteroides (strain ATCC 8293 / DSM 20343 / BCRC 11652 / CCM 1803 / JCM 6124 / NCDO 523 / NBRC 100496 / NCIMB 8023 / NCTC 12954 / NRRL B-1118 / 37Y).